Here is a 290-residue protein sequence, read N- to C-terminus: Acetyl-coenzyme A carboxylase carboxyl transferase subunit beta (290 aa).

A CoA carboxyltransferase N-terminal domain is found at 27 to 290 (LWIKCPSCEA…LTRQPADAVA (264 aa)). The Zn(2+) site is built by Cys-31, Cys-34, Cys-50, and Cys-53. The C4-type zinc-finger motif lies at 31–53 (CPSCEAVLYRNDVEANLHVCPKC).

The protein belongs to the AccD/PCCB family. Acetyl-CoA carboxylase is a heterohexamer composed of biotin carboxyl carrier protein (AccB), biotin carboxylase (AccC) and two subunits each of ACCase subunit alpha (AccA) and ACCase subunit beta (AccD). Requires Zn(2+) as cofactor.

The protein resides in the cytoplasm. The enzyme catalyses N(6)-carboxybiotinyl-L-lysyl-[protein] + acetyl-CoA = N(6)-biotinyl-L-lysyl-[protein] + malonyl-CoA. The protein operates within lipid metabolism; malonyl-CoA biosynthesis; malonyl-CoA from acetyl-CoA: step 1/1. Functionally, component of the acetyl coenzyme A carboxylase (ACC) complex. Biotin carboxylase (BC) catalyzes the carboxylation of biotin on its carrier protein (BCCP) and then the CO(2) group is transferred by the transcarboxylase to acetyl-CoA to form malonyl-CoA. This Paraburkholderia phymatum (strain DSM 17167 / CIP 108236 / LMG 21445 / STM815) (Burkholderia phymatum) protein is Acetyl-coenzyme A carboxylase carboxyl transferase subunit beta.